Here is a 129-residue protein sequence, read N- to C-terminus: Large ribosomal subunit protein bL17 (129 aa).

This sequence belongs to the bacterial ribosomal protein bL17 family. As to quaternary structure, part of the 50S ribosomal subunit. Contacts protein L32.

The polypeptide is Large ribosomal subunit protein bL17 (Polynucleobacter asymbioticus (strain DSM 18221 / CIP 109841 / QLW-P1DMWA-1) (Polynucleobacter necessarius subsp. asymbioticus)).